The chain runs to 233 residues: uncharacterized protein (233 aa).

This is an uncharacterized protein from Bacillus subtilis (strain 168).